The primary structure comprises 137 residues: MPTINQLVRKGRRSQSSKSKAPALNYGYNSMKKSQVNNPAPQKRGVATRVGTMTPKKPNSALRKYARVRLSNLIEVTAYIPGIGHNLQEHSVVLIRGGRVKDLPGVRYHVIRGALDTAGVTDRKQSRSKYGTKKPKK.

The segment at 1–24 (MPTINQLVRKGRRSQSSKSKAPAL) is disordered. Asp102 is modified (3-methylthioaspartic acid).

Belongs to the universal ribosomal protein uS12 family. In terms of assembly, part of the 30S ribosomal subunit. Contacts proteins S8 and S17. May interact with IF1 in the 30S initiation complex.

In terms of biological role, with S4 and S5 plays an important role in translational accuracy. Its function is as follows. Interacts with and stabilizes bases of the 16S rRNA that are involved in tRNA selection in the A site and with the mRNA backbone. Located at the interface of the 30S and 50S subunits, it traverses the body of the 30S subunit contacting proteins on the other side and probably holding the rRNA structure together. The combined cluster of proteins S8, S12 and S17 appears to hold together the shoulder and platform of the 30S subunit. The protein is Small ribosomal subunit protein uS12 of Pediococcus pentosaceus (strain ATCC 25745 / CCUG 21536 / LMG 10740 / 183-1w).